Consider the following 382-residue polypeptide: 2-epi-valiolone synthase (382 aa).

NAD(+)-binding positions include 92–95 (EKSK), 124–128 (GVVVD), 148–149 (TT), lysine 161, lysine 170, and 188–191 (HLRT). Residues glutamate 203, histidine 266, and histidine 283 each coordinate Zn(2+).

It belongs to the sugar phosphate cyclases superfamily. EVS family. NAD(+) serves as cofactor. Co(2+) is required as a cofactor. Requires Zn(2+) as cofactor.

It catalyses the reaction D-sedoheptulose 7-phosphate = 2-epi-valiolone + phosphate. Its function is as follows. Catalyzes the conversion of sedoheptulose 7-phosphate to 2-epi-valiolone, which may serve as an alternative precursor for aminocyclitol biosynthesis. The polypeptide is 2-epi-valiolone synthase (Actinosynnema mirum (strain ATCC 29888 / DSM 43827 / JCM 3225 / NBRC 14064 / NCIMB 13271 / NRRL B-12336 / IMRU 3971 / 101)).